The following is a 121-amino-acid chain: MSAYRFRRAHRLLKTDEFSSVFSLRQQRSNAFFQVFARPNGLDHARVGLVVGKKVAKRAVRRNYIKRCVREWFRLNQQGLDGVDYVVRAKTAFTREQRAEAVTALQALFAKLARCRASSSS.

It belongs to the RnpA family. Consists of a catalytic RNA component (M1 or rnpB) and a protein subunit.

It catalyses the reaction Endonucleolytic cleavage of RNA, removing 5'-extranucleotides from tRNA precursor.. Functionally, RNaseP catalyzes the removal of the 5'-leader sequence from pre-tRNA to produce the mature 5'-terminus. It can also cleave other RNA substrates such as 4.5S RNA. The protein component plays an auxiliary but essential role in vivo by binding to the 5'-leader sequence and broadening the substrate specificity of the ribozyme. The sequence is that of Ribonuclease P protein component from Chromobacterium violaceum (strain ATCC 12472 / DSM 30191 / JCM 1249 / CCUG 213 / NBRC 12614 / NCIMB 9131 / NCTC 9757 / MK).